We begin with the raw amino-acid sequence, 514 residues long: F-box-like/WD repeat-containing protein TBL1XR1 (514 aa).

The residue at position 2 (Ser-2) is an N-acetylserine. Positions 4–36 constitute a LisH domain; it reads SSDEVNFLVYRYLQESGFSHSAFTFGIESHISQ. Residues 41–86 form the F-box-like domain; sequence GALVPPAALISIIQKGLQYVEAEVSINEDGTLFDGRPIESLSLIDA. An N6-acetyllysine modification is found at Lys-102. Ser-119 carries the phosphoserine modification. The segment covering 120–135 has biased composition (low complexity); it reads QQGSAKNGENTANGEE. The tract at residues 120-139 is disordered; the sequence is QQGSAKNGENTANGEENGAH. WD repeat units follow at residues 167–206, 223–262, 264–303, 306–344, 347–386, 389–437, 440–479, and 481–513; these read GHES…TSGS, PSNK…ASTL, QHKG…AKQQ, FHSA…PIKT, GHTN…CVHD, AHNK…CIHT, KHQE…LVHS, and RGTG…LDLR. Lys-277 participates in a covalent cross-link: Glycyl lysine isopeptide (Lys-Gly) (interchain with G-Cter in SUMO2).

It belongs to the WD repeat EBI family. Component of the N-Cor repressor complex, at least composed of NCOR1, NCOR2, HDAC3, TBL1X, TBL1XR1, CORO2A and GPS2. Probable component of some E3 ubiquitin ligase complex. Interacts with histones H2B and H4. Interacts with MECP2; bridges interaction between MECP2 and NCOR1. Interacts with USP44. As to expression, widely expressed including the pituitary, hypothalamus, white and brown adipose tissue, muscle and liver.

It localises to the nucleus. F-box-like protein involved in the recruitment of the ubiquitin/19S proteasome complex to nuclear receptor-regulated transcription units. Plays an essential role in transcription activation mediated by nuclear receptors. Probably acts as integral component of the N-Cor corepressor complex that mediates the recruitment of the 19S proteasome complex, leading to the subsequent proteasomal degradation of N-Cor complex, thereby allowing cofactor exchange, and transcription activation. In Homo sapiens (Human), this protein is F-box-like/WD repeat-containing protein TBL1XR1 (TBL1XR1).